Reading from the N-terminus, the 918-residue chain is DNA repair and recombination protein RAD54B (918 aa).

The segment covering 1–11 (MRRSAAPSQVL) has biased composition (polar residues). Positions 1–29 (MRRSAAPSQVLGNVAKKPRFIPPGKSNAL) are disordered. The region spanning 320–487 (GMRVSGRFGA…YALIEFVNPG (168 aa)) is the Helicase ATP-binding domain. 333-340 (DEMGLGKT) serves as a coordination point for ATP. Positions 438-441 (DEGH) match the DEGH box motif. Positions 653-817 (VLVKLLAAIR…HIHFSVEELR (165 aa)) constitute a Helicase C-terminal domain. Residues 842–873 (KDHQNPSSKKPSVSRCCQLRQDQGKHNSKKPL) are disordered.

The protein belongs to the SNF2/RAD54 helicase family.

It is found in the nucleus. Functionally, involved in DNA repair and mitotic recombination. This Gallus gallus (Chicken) protein is DNA repair and recombination protein RAD54B (RAD54B).